Here is a 199-residue protein sequence, read N- to C-terminus: Peroxiredoxin-1 (199 aa).

Position 2 is an N-acetylserine (serine 2). The 160-residue stretch at 6–165 (AKIGHRAPQF…TLRLVQAFQF (160 aa)) folds into the Thioredoxin domain. The residue at position 7 (lysine 7) is an N6-acetyllysine; alternate. A Glycyl lysine isopeptide (Lys-Gly) (interchain with G-Cter in SUMO2); alternate cross-link involves residue lysine 7. N6-acetyllysine is present on residues lysine 16 and lysine 27. The residue at position 35 (lysine 35) is an N6-acetyllysine; alternate. The residue at position 35 (lysine 35) is an N6-succinyllysine; alternate. Cysteine 52 serves as the catalytic Cysteine sulfenic acid (-SOH) intermediate. The residue at position 90 (threonine 90) is a Phosphothreonine. Lysine 120 is covalently cross-linked (Glycyl lysine isopeptide (Lys-Gly) (interchain with G-Cter in SUMO2)). Position 136 is an N6-acetyllysine (lysine 136). The tract at residues 176 to 199 (GWKPGSDTIKPDVQKSKEYFSKQK) is disordered. Basic and acidic residues predominate over residues 184-199 (IKPDVQKSKEYFSKQK). Residue lysine 185 forms a Glycyl lysine isopeptide (Lys-Gly) (interchain with G-Cter in SUMO1) linkage. Residue lysine 197 is modified to N6-acetyllysine.

Belongs to the peroxiredoxin family. AhpC/Prx1 subfamily. As to quaternary structure, homodimer; disulfide-linked, upon oxidation. 5 homodimers assemble to form a ring-like decamer. Interacts with GDPD5; forms a mixed-disulfide with GDPD5. Interacts with SESN1 and SESN2. Interacts with FAM107A. Post-translationally, phosphorylated on Thr-90 during the M-phase, which leads to a decrease in enzymatic activity. In terms of processing, acetylation increases reducing activity and resistance to superoxidation. Deacetylated by HDAC6 which decreases reducing activity.

Its subcellular location is the cytoplasm. The catalysed reaction is a hydroperoxide + [thioredoxin]-dithiol = an alcohol + [thioredoxin]-disulfide + H2O. Its function is as follows. Thiol-specific peroxidase that catalyzes the reduction of hydrogen peroxide and organic hydroperoxides to water and alcohols, respectively. Plays a role in cell protection against oxidative stress by detoxifying peroxides and as sensor of hydrogen peroxide-mediated signaling events. Might participate in the signaling cascades of growth factors and tumor necrosis factor-alpha by regulating the intracellular concentrations of H(2)O(2). Reduces an intramolecular disulfide bond in GDPD5 that gates the ability to GDPD5 to drive postmitotic motor neuron differentiation. The sequence is that of Peroxiredoxin-1 (PRDX1) from Bos taurus (Bovine).